Consider the following 546-residue polypeptide: ATP synthase subunit alpha (546 aa).

Residue 172-179 (GDRKTGKT) participates in ATP binding. Polar residues-rich tracts occupy residues 511–520 (FRTTEGNNLG) and 536–546 (TELNVSRKTAK). A disordered region spans residues 511–546 (FRTTEGNNLGTEAPVDPLAADDVNKTELNVSRKTAK).

The protein belongs to the ATPase alpha/beta chains family. In terms of assembly, F-type ATPases have 2 components, CF(1) - the catalytic core - and CF(0) - the membrane proton channel. CF(1) has five subunits: alpha(3), beta(3), gamma(1), delta(1), epsilon(1). CF(0) has three main subunits: a(1), b(2) and c(9-12). The alpha and beta chains form an alternating ring which encloses part of the gamma chain. CF(1) is attached to CF(0) by a central stalk formed by the gamma and epsilon chains, while a peripheral stalk is formed by the delta and b chains.

The protein resides in the cell membrane. It catalyses the reaction ATP + H2O + 4 H(+)(in) = ADP + phosphate + 5 H(+)(out). Functionally, produces ATP from ADP in the presence of a proton gradient across the membrane. The alpha chain is a regulatory subunit. In Corynebacterium aurimucosum (strain ATCC 700975 / DSM 44827 / CIP 107346 / CN-1) (Corynebacterium nigricans), this protein is ATP synthase subunit alpha.